A 308-amino-acid polypeptide reads, in one-letter code: Serine/threonine-protein phosphatase 4 catalytic subunit (308 aa).

4 residues coordinate Mn(2+): D51, H53, D79, and N111. H112 functions as the Proton donor in the catalytic mechanism. Positions 161 and 235 each coordinate Mn(2+).

The protein belongs to the PPP phosphatase family. PP-4 (PP-X) subfamily. As to quaternary structure, catalytic subunit of the histone H2A phosphatase complex (HTP-C) containing PPH3, PSY2 and PSY4. Inactivated in a complex with phosphatase methylesterase PPE1 (PP2Ai). Interacts with phosphatase 2A activator RRD1, which can reactivate PP2Ai by dissociating the catalytic subunit from the complex. Interacts with SPT5 and TAP42. Mn(2+) serves as cofactor. Post-translationally, reversibly methyl esterified on Leu-308 by leucine carboxyl methyltransferase 1 (PPM1) and protein phosphatase methylesterase 1 (PPE1). Carboxyl methylation influences the affinity of the catalytic subunit for the different regulatory subunits, thereby modulating the PP2A holoenzyme's substrate specificity, enzyme activity and cellular localization.

It localises to the cytoplasm. It is found in the nucleus. The enzyme catalyses O-phospho-L-seryl-[protein] + H2O = L-seryl-[protein] + phosphate. It carries out the reaction O-phospho-L-threonyl-[protein] + H2O = L-threonyl-[protein] + phosphate. Its function is as follows. Forms the histone H2A phosphatase complex in association with the regulatory subunits PSY2 and PSY4, which dephosphorylates H2AS128ph (gamma-H2A) that has been displaced from sites of DNA lesions in the double-stranded DNA break repair process. Dephosphorylation is necessary for efficient recovery from the DNA damage checkpoint. PPH3 is directly involved in the dephosphorylation and activation of the transcription factor GLN3 in response to nutrient availability. The chain is Serine/threonine-protein phosphatase 4 catalytic subunit (PPH3) from Saccharomyces cerevisiae (strain ATCC 204508 / S288c) (Baker's yeast).